A 412-amino-acid chain; its full sequence is uncharacterized protein (412 aa).

Residues Cys-62, Cys-68, Cys-71, and Cys-143 each coordinate [4Fe-4S] cluster. S-adenosyl-L-methionine contacts are provided by Gln-243, Phe-270, Glu-290, and Asp-338. Residue Cys-364 is the Nucleophile of the active site.

It belongs to the class I-like SAM-binding methyltransferase superfamily. RNA M5U methyltransferase family.

This is an uncharacterized protein from Mesorhizobium japonicum (strain LMG 29417 / CECT 9101 / MAFF 303099) (Mesorhizobium loti (strain MAFF 303099)).